Reading from the N-terminus, the 275-residue chain is Membrane protein insertase YidC 1 (275 aa).

A signal peptide spans 1 to 25; the sequence is MRKVLRVKKNIKIARIVPLVLLLVA. Residue cysteine 26 is the site of N-palmitoyl cysteine attachment. The S-diacylglycerol cysteine moiety is linked to residue cysteine 26. Transmembrane regions (helical) follow at residues 58–78, 129–149, 171–191, 198–216, and 222–240; these read SIGVGIILFTLTIRLMLMPLF, YASLLPLLIQMPVMIALFQAL, LYLLPVLAAVFTFLSTWLTNL, VMMTVMIYVMPLMIFFMGF, and VVLYWTVSNAFQVVQLLLL.

The protein belongs to the OXA1/ALB3/YidC family. Type 2 subfamily.

It is found in the cell membrane. Required for the insertion and/or proper folding and/or complex formation of integral membrane proteins into the membrane. Involved in integration of membrane proteins that insert both dependently and independently of the Sec translocase complex, as well as at least some lipoproteins. This Streptococcus pyogenes serotype M6 (strain ATCC BAA-946 / MGAS10394) protein is Membrane protein insertase YidC 1.